The following is a 238-amino-acid chain: tRNA (guanine-N(7)-)-methyltransferase (238 aa).

E68, E93, D120, and D143 together coordinate S-adenosyl-L-methionine. The active site involves D143. Substrate contacts are provided by residues K147, D179, and 216-219 (TKFE).

The protein belongs to the class I-like SAM-binding methyltransferase superfamily. TrmB family.

The enzyme catalyses guanosine(46) in tRNA + S-adenosyl-L-methionine = N(7)-methylguanosine(46) in tRNA + S-adenosyl-L-homocysteine. It functions in the pathway tRNA modification; N(7)-methylguanine-tRNA biosynthesis. In terms of biological role, catalyzes the formation of N(7)-methylguanine at position 46 (m7G46) in tRNA. The polypeptide is tRNA (guanine-N(7)-)-methyltransferase (Shewanella sp. (strain W3-18-1)).